The following is a 680-amino-acid chain: Oligopeptidase A (680 aa).

Residue His-469 participates in Zn(2+) binding. Residue Glu-470 is part of the active site. Zn(2+)-binding residues include His-473 and His-476.

This sequence belongs to the peptidase M3 family. Zn(2+) is required as a cofactor.

The enzyme catalyses Hydrolysis of oligopeptides, with broad specificity. Gly or Ala commonly occur as P1 or P1' residues, but more distant residues are also important, as is shown by the fact that Z-Gly-Pro-Gly-|-Gly-Pro-Ala is cleaved, but not Z-(Gly)(5).. In terms of biological role, may play a specific role in the degradation of signal peptides after they are released from precursor forms of secreted proteins. Can cleave N-acetyl-L-Ala(4). This chain is Oligopeptidase A (prlC), found in Salmonella typhimurium (strain LT2 / SGSC1412 / ATCC 700720).